Consider the following 211-residue polypeptide: MNTIKILIGLLGIFLFSLSGIVSAQSDATTQLSQLLSNFRTYQAKFNQITFDGQDRVIQQSHGRVMIMRPGRFRWETDSPTKQIIITNGKTLWVYDVDLSQATQQPLAQKTNINPASLLSGSVKDLKQKFTITISPTPDAATFQLVPNLGKSLNFNWIRLKFSKKQLTEMTVLNNLDERSIFQFSQIKVNAPLSSTLFEFKPSRGIDVVKQ.

The signal sequence occupies residues 1–24 (MNTIKILIGLLGIFLFSLSGIVSA).

It belongs to the LolA family. In terms of assembly, monomer.

The protein localises to the periplasm. Its function is as follows. Participates in the translocation of lipoproteins from the inner membrane to the outer membrane. Only forms a complex with a lipoprotein if the residue after the N-terminal Cys is not an aspartate (The Asp acts as a targeting signal to indicate that the lipoprotein should stay in the inner membrane). This Coxiella burnetii (strain RSA 331 / Henzerling II) protein is Outer-membrane lipoprotein carrier protein.